The primary structure comprises 275 residues: NH(3)-dependent NAD(+) synthetase (275 aa).

Position 46 to 53 (46 to 53 (GISGGQDS)) interacts with ATP. Residue aspartate 52 participates in Mg(2+) binding. Position 140 (arginine 140) interacts with deamido-NAD(+). Threonine 160 provides a ligand contact to ATP. Glutamate 165 serves as a coordination point for Mg(2+). Deamido-NAD(+) contacts are provided by lysine 173 and aspartate 180. ATP contacts are provided by lysine 189 and threonine 211. 260–261 (HK) contributes to the deamido-NAD(+) binding site.

This sequence belongs to the NAD synthetase family. Homodimer.

It carries out the reaction deamido-NAD(+) + NH4(+) + ATP = AMP + diphosphate + NAD(+) + H(+). It functions in the pathway cofactor biosynthesis; NAD(+) biosynthesis; NAD(+) from deamido-NAD(+) (ammonia route): step 1/1. In terms of biological role, catalyzes the ATP-dependent amidation of deamido-NAD to form NAD. Uses ammonia as a nitrogen source. In Escherichia coli O45:K1 (strain S88 / ExPEC), this protein is NH(3)-dependent NAD(+) synthetase.